The primary structure comprises 244 residues: tRNA pseudouridine synthase A (244 aa).

Asp55 acts as the Nucleophile in catalysis. A substrate-binding site is contributed by Tyr113.

Belongs to the tRNA pseudouridine synthase TruA family. Homodimer.

It catalyses the reaction uridine(38/39/40) in tRNA = pseudouridine(38/39/40) in tRNA. In terms of biological role, formation of pseudouridine at positions 38, 39 and 40 in the anticodon stem and loop of transfer RNAs. In Phytoplasma mali (strain AT), this protein is tRNA pseudouridine synthase A.